The chain runs to 693 residues: ATP-dependent DNA helicase RecG (693 aa).

The segment at 48–146 is wedge domain; it reads THLYPIGELL…GDLSTPELQE (99 aa). The Helicase ATP-binding domain maps to 283-448; it reads DMALDVPMMR…AYADLDTSVI (166 aa). 296–303 provides a ligand contact to ATP; the sequence is GDVGSGKT. Positions 397 to 400 match the DEAH box motif; the sequence is DEQH. In terms of domain architecture, Helicase C-terminal spans 482-628; sequence EGRQAYWVCT…GFVIAQKDLE (147 aa).

This sequence belongs to the helicase family. RecG subfamily. As to quaternary structure, monomer in solution. Probably a monomer on HJ DNA. Binding to fork DNA is facilitated by SSB; the proteins do not seem to stably associate. Mg(2+) serves as cofactor.

It carries out the reaction Couples ATP hydrolysis with the unwinding of duplex DNA by translocating in the 3'-5' direction.. The enzyme catalyses ATP + H2O = ADP + phosphate + H(+). Functionally, plays a critical role in recombination and DNA repair. Helps process Holliday junction (HJ) intermediates to mature products by catalyzing branch migration. Has replication fork regression activity, unwinds stalled or blocked replication forks to make a HJ that can be resolved by RuvC or RusA. Also rewinds unwound dsDNA in an ATP-dependent manner. Has double-stranded (ds)DNA unwinding activity characteristic of a DNA helicase with 3'-5' polarity in vitro on linear dsDNA; branched duplex DNA (Y-DNA) substrates adopt different conformations that influence which of the two arms are unwound. Binds and unwinds HJ and Y-DNA but not linear duplex DNA; binds no more than 10 nucleotides of ssDNA at a fork. Has a role in constitutive stable DNA replication (cSDR, DNA replication in the absence of protein synthesis) and R-loop (RNA annealed with dsDNA) formation. Unwinds R-loops but not RNA:DNA hybrids. Is genetically synergistic to RadA and RuvABC. The protein is ATP-dependent DNA helicase RecG of Escherichia coli (strain K12).